Reading from the N-terminus, the 935-residue chain is UvrABC system protein A (935 aa).

Residue 31-38 (GLSGSGKS) coordinates ATP. Residues 254-281 (CFKCKMSFEELEPLSFSFNSPKGACESC) form a C4-type zinc finger. ABC transporter domains lie at 310-579 (IFGY…NNHS) and 599-931 (KEKH…KFLA). 631–638 (GVSGSGKS) is an ATP binding site. The segment at 731-757 (CEKCQGDGDIKIEMHFLPDVLVQCDSC) adopts a C4-type zinc-finger fold.

This sequence belongs to the ABC transporter superfamily. UvrA family. Forms a heterotetramer with UvrB during the search for lesions.

It localises to the cytoplasm. The UvrABC repair system catalyzes the recognition and processing of DNA lesions. UvrA is an ATPase and a DNA-binding protein. A damage recognition complex composed of 2 UvrA and 2 UvrB subunits scans DNA for abnormalities. When the presence of a lesion has been verified by UvrB, the UvrA molecules dissociate. This is UvrABC system protein A from Helicobacter pylori (strain ATCC 700392 / 26695) (Campylobacter pylori).